A 131-amino-acid chain; its full sequence is Small ribosomal subunit protein uS8 (131 aa).

This sequence belongs to the universal ribosomal protein uS8 family. In terms of assembly, part of the 30S ribosomal subunit. Contacts proteins S5 and S12.

Functionally, one of the primary rRNA binding proteins, it binds directly to 16S rRNA central domain where it helps coordinate assembly of the platform of the 30S subunit. The polypeptide is Small ribosomal subunit protein uS8 (Bordetella petrii (strain ATCC BAA-461 / DSM 12804 / CCUG 43448)).